The primary structure comprises 299 residues: ATP phosphoribosyltransferase (299 aa).

It belongs to the ATP phosphoribosyltransferase family. Long subfamily. The cofactor is Mg(2+).

It is found in the cytoplasm. It carries out the reaction 1-(5-phospho-beta-D-ribosyl)-ATP + diphosphate = 5-phospho-alpha-D-ribose 1-diphosphate + ATP. The protein operates within amino-acid biosynthesis; L-histidine biosynthesis; L-histidine from 5-phospho-alpha-D-ribose 1-diphosphate: step 1/9. Its activity is regulated as follows. Feedback inhibited by histidine. Functionally, catalyzes the condensation of ATP and 5-phosphoribose 1-diphosphate to form N'-(5'-phosphoribosyl)-ATP (PR-ATP). Has a crucial role in the pathway because the rate of histidine biosynthesis seems to be controlled primarily by regulation of HisG enzymatic activity. This Campylobacter jejuni subsp. jejuni serotype O:23/36 (strain 81-176) protein is ATP phosphoribosyltransferase.